Consider the following 736-residue polypeptide: DNA topoisomerase 1 (736 aa).

The Toprim domain maps to K2–I113. The Mg(2+) site is built by E8 and D82. The Topo IA-type catalytic domain maps to D129–I552. The tract at residues S163–Q168 is interaction with DNA. Y297 (O-(5'-phospho-DNA)-tyrosine intermediate) is an active-site residue. 4 C4-type zinc fingers span residues C572 to C598, C616 to C642, C663 to C689, and C702 to C725.

The protein belongs to the type IA topoisomerase family. As to quaternary structure, monomer. Requires Mg(2+) as cofactor.

It catalyses the reaction ATP-independent breakage of single-stranded DNA, followed by passage and rejoining.. Its function is as follows. Releases the supercoiling and torsional tension of DNA, which is introduced during the DNA replication and transcription, by transiently cleaving and rejoining one strand of the DNA duplex. Introduces a single-strand break via transesterification at a target site in duplex DNA. The scissile phosphodiester is attacked by the catalytic tyrosine of the enzyme, resulting in the formation of a DNA-(5'-phosphotyrosyl)-enzyme intermediate and the expulsion of a 3'-OH DNA strand. The free DNA strand then undergoes passage around the unbroken strand, thus removing DNA supercoils. Finally, in the religation step, the DNA 3'-OH attacks the covalent intermediate to expel the active-site tyrosine and restore the DNA phosphodiester backbone. The polypeptide is DNA topoisomerase 1 (Helicobacter pylori (strain ATCC 700392 / 26695) (Campylobacter pylori)).